The primary structure comprises 936 residues: Phosphoenolpyruvate carboxylase (936 aa).

Residues 1 to 20 (MSSLNLSAGPEPVSERPDDA) are disordered. Catalysis depends on residues His-164 and Lys-598.

It belongs to the PEPCase type 1 family. Mg(2+) serves as cofactor.

It carries out the reaction oxaloacetate + phosphate = phosphoenolpyruvate + hydrogencarbonate. Its function is as follows. Forms oxaloacetate, a four-carbon dicarboxylic acid source for the tricarboxylic acid cycle. The protein is Phosphoenolpyruvate carboxylase (ppc) of Rhodopseudomonas palustris (strain ATCC BAA-98 / CGA009).